Reading from the N-terminus, the 174-residue chain is Large ribosomal subunit protein uL10 (174 aa).

It belongs to the universal ribosomal protein uL10 family. As to quaternary structure, part of the ribosomal stalk of the 50S ribosomal subunit. The N-terminus interacts with L11 and the large rRNA to form the base of the stalk. The C-terminus forms an elongated spine to which L12 dimers bind in a sequential fashion forming a multimeric L10(L12)X complex.

Its function is as follows. Forms part of the ribosomal stalk, playing a central role in the interaction of the ribosome with GTP-bound translation factors. The sequence is that of Large ribosomal subunit protein uL10 from Methylibium petroleiphilum (strain ATCC BAA-1232 / LMG 22953 / PM1).